The sequence spans 141 residues: uncharacterized protein (141 aa).

The Ferritin-like diiron domain maps to 13–141 (VTKGTELEKE…LKGILDRYFK (129 aa)). Fe cation is bound by residues E63, H66, E125, and H128.

This is an uncharacterized protein from Methanocaldococcus jannaschii (strain ATCC 43067 / DSM 2661 / JAL-1 / JCM 10045 / NBRC 100440) (Methanococcus jannaschii).